A 627-amino-acid polypeptide reads, in one-letter code: Altered inheritance of mitochondria protein 9, mitochondrial (627 aa).

The N-terminal 43 residues, 1–43 (MIRYTVAGHSRRCVVGASKRVGAIKCITVAATKRFISNKPNEV), are a transit peptide targeting the mitochondrion.

Belongs to the AIM9 family.

The protein resides in the mitochondrion. The chain is Altered inheritance of mitochondria protein 9, mitochondrial (AIM9) from Saccharomyces cerevisiae (strain RM11-1a) (Baker's yeast).